We begin with the raw amino-acid sequence, 265 residues long: Flavin-dependent thymidylate synthase (265 aa).

Residues 11–224 (GFLKLIDFMG…PIAFNSFENH (214 aa)) form the ThyX domain. FAD contacts are provided by residues Ser-56, 79–81 (RHR), and Glu-87. 76 to 79 (QWMR) is a dUMP binding site. The ThyX motif signature appears at 79–89 (RHRTARINEVS). Arg-155 provides a ligand contact to dUMP. Residues 171 to 173 (DLN) and His-177 each bind FAD. A dUMP-binding site is contributed by Arg-182. The active-site Involved in ionization of N3 of dUMP, leading to its activation is Arg-182.

This sequence belongs to the thymidylate synthase ThyX family. In terms of assembly, homotetramer. FAD is required as a cofactor.

It carries out the reaction dUMP + (6R)-5,10-methylene-5,6,7,8-tetrahydrofolate + NADPH + H(+) = dTMP + (6S)-5,6,7,8-tetrahydrofolate + NADP(+). It participates in pyrimidine metabolism; dTTP biosynthesis. Functionally, catalyzes the reductive methylation of 2'-deoxyuridine-5'-monophosphate (dUMP) to 2'-deoxythymidine-5'-monophosphate (dTMP) while utilizing 5,10-methylenetetrahydrofolate (mTHF) as the methyl donor, and NADPH and FADH(2) as the reductant. The chain is Flavin-dependent thymidylate synthase from Borreliella burgdorferi (strain ATCC 35210 / DSM 4680 / CIP 102532 / B31) (Borrelia burgdorferi).